The sequence spans 801 residues: Mitochondrial intermediate peptidase (801 aa).

The N-terminal 41 residues, Met-1–Phe-41, are a transit peptide targeting the mitochondrion. His-564 serves as a coordination point for Zn(2+). The active site involves Glu-565. Zn(2+) is bound by residues His-568 and His-571.

The protein belongs to the peptidase M3 family. Zn(2+) serves as cofactor.

It is found in the mitochondrion matrix. The enzyme catalyses Release of an N-terminal octapeptide as second stage of processing of some proteins imported into the mitochondrion.. Functionally, cleaves proteins, imported into the mitochondrion, to their mature size. While most mitochondrial precursor proteins are processed to the mature form in one step by mitochondrial processing peptidase (MPP), the sequential cleavage by MIP of an octapeptide after initial processing by MPP is a required step for a subgroup of nuclear-encoded precursor proteins destined for the matrix or the inner membrane. The protein is Mitochondrial intermediate peptidase (oct1) of Aspergillus fumigatus (strain ATCC MYA-4609 / CBS 101355 / FGSC A1100 / Af293) (Neosartorya fumigata).